A 936-amino-acid chain; its full sequence is Protein translocase subunit SecA (936 aa).

ATP-binding positions include Q87, 105–109 (GEGKT), and D515. 4 residues coordinate Zn(2+): C920, C922, C931, and H932.

Belongs to the SecA family. In terms of assembly, monomer and homodimer. Part of the essential Sec protein translocation apparatus which comprises SecA, SecYEG and auxiliary proteins SecDF-YajC and YidC. Requires Zn(2+) as cofactor.

It localises to the cell inner membrane. The protein resides in the cytoplasm. The enzyme catalyses ATP + H2O + cellular proteinSide 1 = ADP + phosphate + cellular proteinSide 2.. Its function is as follows. Part of the Sec protein translocase complex. Interacts with the SecYEG preprotein conducting channel. Has a central role in coupling the hydrolysis of ATP to the transfer of proteins into and across the cell membrane, serving both as a receptor for the preprotein-SecB complex and as an ATP-driven molecular motor driving the stepwise translocation of polypeptide chains across the membrane. This Paraburkholderia phytofirmans (strain DSM 17436 / LMG 22146 / PsJN) (Burkholderia phytofirmans) protein is Protein translocase subunit SecA.